The chain runs to 227 residues: Adenylate kinase (227 aa).

Position 21-26 (21-26 (GAGKGT)) interacts with ATP. Residues 41 to 70 (ATGDMLRSQVAKQTPLGIEAKKIMDDGKLV) form an NMP region. AMP-binding positions include Thr-42, Arg-47, 68–70 (KLV), 97–100 (GFPR), and Gln-104. An LID region spans residues 138–175 (GRLVHPASGRSYHKVFNPPKTEMKDDITGEDLVQRSDD). Residues Arg-139 and 148 to 149 (SY) contribute to the ATP site. AMP-binding residues include Arg-172 and Arg-183. Residue Gln-211 participates in ATP binding.

Belongs to the adenylate kinase family. AK2 subfamily. Monomer.

It localises to the cytoplasm. The protein localises to the cytosol. The protein resides in the mitochondrion intermembrane space. The enzyme catalyses AMP + ATP = 2 ADP. Catalyzes the reversible transfer of the terminal phosphate group between ATP and AMP. Plays an important role in cellular energy homeostasis and in adenine nucleotide metabolism. Adenylate kinase activity is critical for regulation of the phosphate utilization and the AMP de novo biosynthesis pathways. This chain is Adenylate kinase, found in Kluyveromyces lactis (strain ATCC 8585 / CBS 2359 / DSM 70799 / NBRC 1267 / NRRL Y-1140 / WM37) (Yeast).